Reading from the N-terminus, the 393-residue chain is NAD(P)H-quinone oxidoreductase subunit H, chloroplastic (393 aa).

Belongs to the complex I 49 kDa subunit family. NDH is composed of at least 16 different subunits, 5 of which are encoded in the nucleus.

It localises to the plastid. Its subcellular location is the chloroplast thylakoid membrane. It catalyses the reaction a plastoquinone + NADH + (n+1) H(+)(in) = a plastoquinol + NAD(+) + n H(+)(out). The enzyme catalyses a plastoquinone + NADPH + (n+1) H(+)(in) = a plastoquinol + NADP(+) + n H(+)(out). In terms of biological role, NDH shuttles electrons from NAD(P)H:plastoquinone, via FMN and iron-sulfur (Fe-S) centers, to quinones in the photosynthetic chain and possibly in a chloroplast respiratory chain. The immediate electron acceptor for the enzyme in this species is believed to be plastoquinone. Couples the redox reaction to proton translocation, and thus conserves the redox energy in a proton gradient. The protein is NAD(P)H-quinone oxidoreductase subunit H, chloroplastic of Spinacia oleracea (Spinach).